Consider the following 219-residue polypeptide: Probable GTP-binding protein EngB (219 aa).

Residues 26–200 (EGVEIAFAGR…RAKLDTWFAP (175 aa)) form the EngB-type G domain. GTP-binding positions include 34-41 (GRSNAGKS), 61-65 (GRTQL), 79-82 (DLPG), 146-149 (TKAD), and 179-181 (FSS). Residues Ser-41 and Thr-63 each coordinate Mg(2+).

Belongs to the TRAFAC class TrmE-Era-EngA-EngB-Septin-like GTPase superfamily. EngB GTPase family. Mg(2+) is required as a cofactor.

Functionally, necessary for normal cell division and for the maintenance of normal septation. The protein is Probable GTP-binding protein EngB of Vibrio parahaemolyticus serotype O3:K6 (strain RIMD 2210633).